Reading from the N-terminus, the 188-residue chain is Large ribosomal subunit protein uL5 (188 aa).

It belongs to the universal ribosomal protein uL5 family. Part of the 50S ribosomal subunit; contacts the 5S rRNA and probably tRNA. Forms a bridge to the 30S subunit in the 70S ribosome.

Its function is as follows. This is one of the proteins that bind and probably mediate the attachment of the 5S RNA into the large ribosomal subunit, where it forms part of the central protuberance. In the 70S ribosome it contacts protein S13 of the 30S subunit (bridge B1b), connecting the 2 subunits; this bridge is implicated in subunit movement. May contact the P site tRNA; the 5S rRNA and some of its associated proteins might help stabilize positioning of ribosome-bound tRNAs. This is Large ribosomal subunit protein uL5 from Pyrococcus horikoshii (strain ATCC 700860 / DSM 12428 / JCM 9974 / NBRC 100139 / OT-3).